The chain runs to 185 residues: Small ribosomal subunit protein uS7 (185 aa).

This sequence belongs to the universal ribosomal protein uS7 family. In terms of assembly, part of the 30S ribosomal subunit.

In terms of biological role, one of the primary rRNA binding proteins, it binds directly to 16S rRNA where it nucleates assembly of the head domain of the 30S subunit. Is located at the subunit interface close to the decoding center. This chain is Small ribosomal subunit protein uS7, found in Methanosarcina barkeri (strain Fusaro / DSM 804).